We begin with the raw amino-acid sequence, 518 residues long: Sensor protein kinase HptS (518 aa).

2 consecutive transmembrane segments (helical) span residues 20-40 (IFPVFLVIIIGLVSFYAIYIW) and 222-242 (GITLLIVMAVVLVLLVIFGFI). The region spanning 297-513 (EQLIHSIEHT…LICYKIPLSR (217 aa)) is the Histidine kinase domain. Histidine 325 carries the post-translational modification Phosphohistidine; by autocatalysis.

In terms of processing, autophosphorylated.

The protein localises to the cell membrane. It catalyses the reaction ATP + protein L-histidine = ADP + protein N-phospho-L-histidine.. Functionally, member of the two-component regulatory system HptS/HptR that regulates genes involved in hexose phosphate transport system in response to changes in extracellular phosphate sources. May act as a sensor protein kinase which is autophosphorylated at a histidine residue and transfers its phosphate group to the conserved aspartic acid residue in the regulatory domain of HptS. In turn, HptS antagonizes CcpA-dependent transcription of a subset of CcpA-regulated genes involved in antibiotic susceptibility. The polypeptide is Sensor protein kinase HptS (hptS) (Staphylococcus aureus (strain MSSA476)).